A 790-amino-acid polypeptide reads, in one-letter code: LPS-assembly protein LptD (790 aa).

Residues 1–20 form the signal peptide; that stretch reads MRMLRWLILSAFSVAGAVQA.

It belongs to the LptD family. In terms of assembly, component of the lipopolysaccharide transport and assembly complex. Interacts with LptE and LptA.

The protein localises to the cell outer membrane. Functionally, together with LptE, is involved in the assembly of lipopolysaccharide (LPS) at the surface of the outer membrane. The chain is LPS-assembly protein LptD from Bordetella pertussis (strain Tohama I / ATCC BAA-589 / NCTC 13251).